The primary structure comprises 386 residues: MPDPYAWLQNSLLTIHRADWYRSVQAIQGRAGASVVLGGQEVINFASNDYLGLAGDERLIAAAVAATQEFGTGSTGSRLLSGHRELHGQLEKAIASWKQTEDALVFSSGYLANIGAIAALVGKRDLILSDQYNHSSLKNGAILSGATVREYSHCQVGELKTQLLEQRQNYRRCLILTDSVFSMDGDLCPLPDLLDLAEEFSCMLLVDEAHATGVMGETGAGCVEHFGCTGRQLIQIGTLSKALGSLGGYVTGSHNLIDYLRNRAPSWIYTTGLSPADTAAALAAINIAQQEPQHRMQLWHNVNYLRELLQKIPNLKLLPSASPILCFQLSSPSEALQVGKQLKQAGIFAPAIRPPTVPTSRIRISLMATHKASHIEKLVAVLQGLN.

A substrate-binding site is contributed by Arg22. Pyridoxal 5'-phosphate is bound at residue 109-110 (GY). His134 contributes to the substrate binding site. Pyridoxal 5'-phosphate contacts are provided by residues Ser182, 207 to 210 (DEAH), and 238 to 241 (TLSK). Lys241 is subject to N6-(pyridoxal phosphate)lysine. A substrate-binding site is contributed by Thr356.

The protein belongs to the class-II pyridoxal-phosphate-dependent aminotransferase family. BioF subfamily. In terms of assembly, homodimer. Pyridoxal 5'-phosphate is required as a cofactor.

It catalyses the reaction 6-carboxyhexanoyl-[ACP] + L-alanine + H(+) = (8S)-8-amino-7-oxononanoate + holo-[ACP] + CO2. The protein operates within cofactor biosynthesis; biotin biosynthesis. Its function is as follows. Catalyzes the decarboxylative condensation of pimeloyl-[acyl-carrier protein] and L-alanine to produce 8-amino-7-oxononanoate (AON), [acyl-carrier protein], and carbon dioxide. In Nostoc sp. (strain PCC 7120 / SAG 25.82 / UTEX 2576), this protein is Putative 8-amino-7-oxononanoate synthase (bioF).